The chain runs to 631 residues: DNA mismatch repair protein MutL (631 aa).

Belongs to the DNA mismatch repair MutL/HexB family.

In terms of biological role, this protein is involved in the repair of mismatches in DNA. It is required for dam-dependent methyl-directed DNA mismatch repair. May act as a 'molecular matchmaker', a protein that promotes the formation of a stable complex between two or more DNA-binding proteins in an ATP-dependent manner without itself being part of a final effector complex. The chain is DNA mismatch repair protein MutL from Lactobacillus acidophilus (strain ATCC 700396 / NCK56 / N2 / NCFM).